Consider the following 367-residue polypeptide: Alanine racemase (367 aa).

Catalysis depends on K40, which acts as the Proton acceptor; specific for D-alanine. N6-(pyridoxal phosphate)lysine is present on K40. R136 contributes to the substrate binding site. Y263 acts as the Proton acceptor; specific for L-alanine in catalysis. M310 is a substrate binding site.

This sequence belongs to the alanine racemase family. It depends on pyridoxal 5'-phosphate as a cofactor.

The enzyme catalyses L-alanine = D-alanine. Its pathway is amino-acid biosynthesis; D-alanine biosynthesis; D-alanine from L-alanine: step 1/1. Its function is as follows. Catalyzes the interconversion of L-alanine and D-alanine. May also act on other amino acids. The chain is Alanine racemase (alr) from Lactococcus lactis subsp. lactis (strain IL1403) (Streptococcus lactis).